A 321-amino-acid polypeptide reads, in one-letter code: Lambda-crystallin homolog (321 aa).

Serine 6 is modified (phosphoserine). NAD(+) is bound by residues leucine 19 to isoleucine 20, aspartate 39, glutamate 100, and lysine 105.

It belongs to the 3-hydroxyacyl-CoA dehydrogenase family. As to quaternary structure, homodimer.

The protein resides in the cytoplasm. It carries out the reaction L-gulonate + NAD(+) = 3-dehydro-L-gulonate + NADH + H(+). Inhibited by malonate. Functionally, has high L-gulonate 3-dehydrogenase activity. It also exhibits low dehydrogenase activity toward L-3-hydroxybutyrate (HBA) and L-threonate. The polypeptide is Lambda-crystallin homolog (CRYL1) (Bos taurus (Bovine)).